The primary structure comprises 500 residues: MSSFPWLTILVVLPIFAGSLIFFLPHRGNKIVRWYTMSICLLEFLLMTYAFCYHFQLEDPLIQLKEDSKWIDVFNFHWRLGIDGLSLGSILLTGFMTTLATLAAWPVTRNSRLFYFLMLAMYSGQIGLFSSRDLLLFFIMWELELIPVYLLLSMWGGKRRLYSATKFILYTAGGSIFFLIGVLGMGLYGSNEPRLDLERLINQSYPATLEILFYFGFLIAYAVKLPIIPLHTWLPDTHGEAHYSTCMLLAGILLKMGAYGLIRINMELLPHAHYLFSPWLVIIGAMQIIYAASTSLGQRNFKKRIAYSSVSHMGFIIIGIGSITNIGLNGAILQILSHGFIGATLFFLAGTACDRMRLVYLEELGGVSIPMPKIFTMFSSFSMASLALPGMSGFVAELVVFFGLITSPKFLLMPKMLITFVMAIGMILTPIYLLSMLRQMFYGYKLFHVPNENFEDSGPRELFLLICIFLPVIGIGIYPDFVLSLSVDRVEALLSNYYPK.

Helical transmembrane passes span 4 to 24 (FPWL…IFFL), 37 to 57 (MSIC…HFQL), 87 to 107 (LGSI…AWPV), 113 to 130 (LFYF…GLFS), 134 to 154 (LLLF…LLSM), 167 to 187 (FILY…GMGL), 211 to 231 (ILFY…IPLH), 242 to 262 (HYST…YGLI), 272 to 292 (AHYL…IYAA), 313 to 333 (MGFI…GAIL), 334 to 354 (QILS…TACD), 386 to 406 (LALP…GLIT), 417 to 437 (LITF…LSML), and 462 to 482 (LFLL…PDFV).

This sequence belongs to the complex I subunit 4 family.

It localises to the plastid. The protein localises to the chloroplast thylakoid membrane. The catalysed reaction is a plastoquinone + NADH + (n+1) H(+)(in) = a plastoquinol + NAD(+) + n H(+)(out). The enzyme catalyses a plastoquinone + NADPH + (n+1) H(+)(in) = a plastoquinol + NADP(+) + n H(+)(out). The chain is NAD(P)H-quinone oxidoreductase chain 4, chloroplastic from Oryza nivara (Indian wild rice).